We begin with the raw amino-acid sequence, 98 residues long: MSLTYMNMLLAFMISLMGLLMYRSHMMSSLLCLEGMMLSLFVMMTVTILNTHMTLASMLPIILLVFAACEAALGLSLLVMVSTTYGMDYVQNLNLLQC.

3 helical membrane passes run 1-21 (MSLTYMNMLLAFMISLMGLLM), 29-49 (SLLCLEGMMLSLFVMMTVTIL), and 61-81 (IILLVFAACEAALGLSLLVMV).

It belongs to the complex I subunit 4L family. As to quaternary structure, core subunit of respiratory chain NADH dehydrogenase (Complex I) which is composed of 45 different subunits.

The protein localises to the mitochondrion inner membrane. The catalysed reaction is a ubiquinone + NADH + 5 H(+)(in) = a ubiquinol + NAD(+) + 4 H(+)(out). In terms of biological role, core subunit of the mitochondrial membrane respiratory chain NADH dehydrogenase (Complex I) which catalyzes electron transfer from NADH through the respiratory chain, using ubiquinone as an electron acceptor. Part of the enzyme membrane arm which is embedded in the lipid bilayer and involved in proton translocation. The protein is NADH-ubiquinone oxidoreductase chain 4L (MT-ND4L) of Sturnira lilium (Lesser yellow-shouldered bat).